A 231-amino-acid chain; its full sequence is Cytochrome c oxidase subunit 2 (231 aa).

At 1–14 the chain is on the mitochondrial intermembrane side; the sequence is MAHPVHVGLKEATS. A helical transmembrane segment spans residues 15-45; sequence PFMEELIAFHDHTLMIIFLISSLVLYIISMM. Over 46–59 the chain is Mitochondrial matrix; sequence LTTKLTHTSTMNAQ. The helical transmembrane segment at 60 to 87 threads the bilayer; the sequence is EIEIIWTILPAIILIMIALPSLRILYMT. Over 88–231 the chain is Mitochondrial intermembrane; that stretch reads DEFNKPYLTL…WASYLYIVSL (144 aa). Cu cation contacts are provided by histidine 161, cysteine 196, glutamate 198, cysteine 200, histidine 204, and methionine 207. Glutamate 198 provides a ligand contact to Mg(2+).

It belongs to the cytochrome c oxidase subunit 2 family. As to quaternary structure, component of the cytochrome c oxidase (complex IV, CIV), a multisubunit enzyme composed of 14 subunits. The complex is composed of a catalytic core of 3 subunits MT-CO1, MT-CO2 and MT-CO3, encoded in the mitochondrial DNA, and 11 supernumerary subunits COX4I, COX5A, COX5B, COX6A, COX6B, COX6C, COX7A, COX7B, COX7C, COX8 and NDUFA4, which are encoded in the nuclear genome. The complex exists as a monomer or a dimer and forms supercomplexes (SCs) in the inner mitochondrial membrane with NADH-ubiquinone oxidoreductase (complex I, CI) and ubiquinol-cytochrome c oxidoreductase (cytochrome b-c1 complex, complex III, CIII), resulting in different assemblies (supercomplex SCI(1)III(2)IV(1) and megacomplex MCI(2)III(2)IV(2)). Found in a complex with TMEM177, COA6, COX18, COX20, SCO1 and SCO2. Interacts with TMEM177 in a COX20-dependent manner. Interacts with COX20. Interacts with COX16. The cofactor is Cu cation.

The protein resides in the mitochondrion inner membrane. It carries out the reaction 4 Fe(II)-[cytochrome c] + O2 + 8 H(+)(in) = 4 Fe(III)-[cytochrome c] + 2 H2O + 4 H(+)(out). In terms of biological role, component of the cytochrome c oxidase, the last enzyme in the mitochondrial electron transport chain which drives oxidative phosphorylation. The respiratory chain contains 3 multisubunit complexes succinate dehydrogenase (complex II, CII), ubiquinol-cytochrome c oxidoreductase (cytochrome b-c1 complex, complex III, CIII) and cytochrome c oxidase (complex IV, CIV), that cooperate to transfer electrons derived from NADH and succinate to molecular oxygen, creating an electrochemical gradient over the inner membrane that drives transmembrane transport and the ATP synthase. Cytochrome c oxidase is the component of the respiratory chain that catalyzes the reduction of oxygen to water. Electrons originating from reduced cytochrome c in the intermembrane space (IMS) are transferred via the dinuclear copper A center (CU(A)) of subunit 2 and heme A of subunit 1 to the active site in subunit 1, a binuclear center (BNC) formed by heme A3 and copper B (CU(B)). The BNC reduces molecular oxygen to 2 water molecules using 4 electrons from cytochrome c in the IMS and 4 protons from the mitochondrial matrix. This is Cytochrome c oxidase subunit 2 (MT-CO2) from Brachyteles hypoxanthus (Northern muriqui).